The chain runs to 382 residues: Lipid-A-disaccharide synthase (382 aa).

This sequence belongs to the LpxB family.

It catalyses the reaction 2-N,3-O-bis[(3R)-3-hydroxytetradecanoyl]-alpha-D-glucosaminyl 1-phosphate + UDP-2-N,3-O-bis[(3R)-3-hydroxytetradecanoyl]-alpha-D-glucosamine = lipid A disaccharide (E. coli) + UDP + H(+). The catalysed reaction is a lipid X + a UDP-2-N,3-O-bis[(3R)-3-hydroxyacyl]-alpha-D-glucosamine = a lipid A disaccharide + UDP + H(+). It functions in the pathway glycolipid biosynthesis; lipid IV(A) biosynthesis; lipid IV(A) from (3R)-3-hydroxytetradecanoyl-[acyl-carrier-protein] and UDP-N-acetyl-alpha-D-glucosamine: step 5/6. Its function is as follows. Condensation of UDP-2,3-diacylglucosamine and 2,3-diacylglucosamine-1-phosphate to form lipid A disaccharide, a precursor of lipid A, a phosphorylated glycolipid that anchors the lipopolysaccharide to the outer membrane of the cell. The polypeptide is Lipid-A-disaccharide synthase (Serratia proteamaculans (strain 568)).